A 215-amino-acid polypeptide reads, in one-letter code: Mite allergen Der p 7 (215 aa).

An N-terminal signal peptide occupies residues Met-1–Ala-17. Asn-151 carries N-linked (GlcNAc...) asparagine glycosylation.

The protein belongs to the mite group 7 allergen family.

It is found in the secreted. The polypeptide is Mite allergen Der p 7 (DERP7) (Dermatophagoides pteronyssinus (European house dust mite)).